Reading from the N-terminus, the 445-residue chain is Phosphoglucosamine mutase (445 aa).

Serine 102 functions as the Phosphoserine intermediate in the catalytic mechanism. Mg(2+) contacts are provided by serine 102, aspartate 241, aspartate 243, and aspartate 245. At serine 102 the chain carries Phosphoserine.

This sequence belongs to the phosphohexose mutase family. The cofactor is Mg(2+). Activated by phosphorylation.

The enzyme catalyses alpha-D-glucosamine 1-phosphate = D-glucosamine 6-phosphate. Its function is as follows. Catalyzes the conversion of glucosamine-6-phosphate to glucosamine-1-phosphate. The polypeptide is Phosphoglucosamine mutase (Shewanella pealeana (strain ATCC 700345 / ANG-SQ1)).